Reading from the N-terminus, the 397-residue chain is Yellow-related salivary protein LJM111 (397 aa).

An N-terminal signal peptide occupies residues 1 to 18; that stretch reads MKLFFFLYTFGLVQTIFG.

This sequence belongs to the major royal jelly protein family. Salivary gland (at protein level).

It localises to the secreted. Functionally, probably modulates blood feeding of sand flies on vertebrate species by binding and sequestering different mediators involved in the host response. Binds biogenic amines. Binds adrenaline and noradrenaline with high affinity. Binds serotonin. Binds dopamine and octopamine. Exhibits anti-inflammatory effects in the host: reduces IL17A, TNF-alpha (TNF) and IFN-gamma (IFNG) production by host lymph node cells, suppresses expression of MHC-II and CD86, reduces TNF-alpha production and increases IL10 production, in host bone marrow-derived dendritic cells (BMDCs) stimulated by lipopolysaccharides. Reduces pain in mouse mechanical hypernociception model. The polypeptide is Yellow-related salivary protein LJM111 (Lutzomyia longipalpis (Sand fly)).